We begin with the raw amino-acid sequence, 302 residues long: Methionyl-tRNA formyltransferase (302 aa).

108-111 (SLLP) serves as a coordination point for (6S)-5,6,7,8-tetrahydrofolate. The segment covering 276-288 (REGKRPMEPEEFL) has biased composition (basic and acidic residues). The segment at 276–302 (REGKRPMEPEEFLRGFPLPEGSRAHTA) is disordered.

Belongs to the Fmt family.

The enzyme catalyses L-methionyl-tRNA(fMet) + (6R)-10-formyltetrahydrofolate = N-formyl-L-methionyl-tRNA(fMet) + (6S)-5,6,7,8-tetrahydrofolate + H(+). Functionally, attaches a formyl group to the free amino group of methionyl-tRNA(fMet). The formyl group appears to play a dual role in the initiator identity of N-formylmethionyl-tRNA by promoting its recognition by IF2 and preventing the misappropriation of this tRNA by the elongation apparatus. In Cereibacter sphaeroides (strain KD131 / KCTC 12085) (Rhodobacter sphaeroides), this protein is Methionyl-tRNA formyltransferase.